We begin with the raw amino-acid sequence, 359 residues long: UDP-2-acetamido-2-deoxy-3-oxo-D-glucuronate aminotransferase (359 aa).

Residues Gly29, Tyr31, and Ser184 each contribute to the UDP-2-acetamido-2-deoxy-alpha-D-ribo-hex-3-uluronate site. At Lys185 the chain carries N6-(pyridoxal phosphate)lysine. UDP-2-acetamido-2-deoxy-alpha-D-ribo-hex-3-uluronate-binding residues include Arg229, His308, and Tyr309.

It belongs to the DegT/DnrJ/EryC1 family. Homodimer. It depends on pyridoxal 5'-phosphate as a cofactor.

It catalyses the reaction UDP-2-acetamido-2-deoxy-alpha-D-ribo-hex-3-uluronate + L-glutamate = UDP-2-acetamido-3-amino-2,3-dideoxy-alpha-D-glucuronate + 2-oxoglutarate. It participates in bacterial outer membrane biogenesis; LPS O-antigen biosynthesis. Plays a role in the biosynthesis of B-band O antigen for serotype O5. Catalyzes the amination of UDP-2-acetamido-2-deoxy-3-oxo-D-glucuronic acid (UDP-3-oxo-D-GlcNAcA) to UDP-2-acetamido-3-amino-2,3-dideoxy-D-glucuronic acid (UDP-GlcNAc3NA), using L-glutamate as the preferred amine donor. This chain is UDP-2-acetamido-2-deoxy-3-oxo-D-glucuronate aminotransferase, found in Pseudomonas aeruginosa (strain ATCC 15692 / DSM 22644 / CIP 104116 / JCM 14847 / LMG 12228 / 1C / PRS 101 / PAO1).